A 296-amino-acid chain; its full sequence is Putative gluconeogenesis factor (296 aa).

It belongs to the gluconeogenesis factor family.

Its subcellular location is the cytoplasm. Its function is as follows. Required for morphogenesis under gluconeogenic growth conditions. This chain is Putative gluconeogenesis factor, found in Vibrio cholerae serotype O1 (strain ATCC 39315 / El Tor Inaba N16961).